We begin with the raw amino-acid sequence, 372 residues long: Segmentation polarity homeobox protein engrailed (372 aa).

Disordered stretches follow at residues methionine 1–glutamine 35, tyrosine 47–threonine 112, glutamate 196–proline 246, and aspartate 261–alanine 286. 2 stretches are compositionally biased toward basic and acidic residues: residues aspartate 79 to arginine 105 and arginine 197 to aspartate 215. A compositionally biased stretch (low complexity) spans serine 216–serine 244. The segment at residues glutamate 280–serine 339 is a DNA-binding region (homeobox).

Belongs to the engrailed homeobox family. In terms of tissue distribution, expressed in the middle silk gland but not in the posterior silk gland during the fourth molt/fifth intermolt period.

The protein localises to the nucleus. This protein might be involved in the compartmentalization of the silk gland. The chain is Segmentation polarity homeobox protein engrailed (en) from Bombyx mori (Silk moth).